The following is a 557-amino-acid chain: MDSDEGYNYEFDEDEECSEEDSGAEEEEDEDDDEPDDDTLDLGEVELVEPGLGVGGERDGLLCGETGGGGGSALGPGGGGGGGGGGGGGGPGHEQEEDYRYEVLTAEQILQHMVECIREVNEVIQNPATITRILLSHFNWDKEKLMERYFDGNLEKLFAECHVINPSKKSRTRQMNTRSSAQDMPCQICYLNYPNSYFTGLECGHKFCMQCWSEYLTTKIMEEGMGQTISCPAHGCDILVDDNTVMRLITDSKVKLKYQHLITNSFVECNRLLKWCPAPDCHHVVKVQYPDAKPVRCKCGRQFCFNCGENWHDPVKCKWLKKWIKKCDDDSETSNWIAANTKECPKCHVTIEKDGGCNHMVCRNQNCKAEFCWVCLGPWEPHGSAWYNCNRYNEDDAKAARDAQERSRAALQRYLFYCNRYMNHMQSLRFEHKLYAQVKQKMEEMQQHNMSWIEVQFLKKAVDVLCQCRATLMYTYVFAFYLKKNNQSIIFENNQADLENATEVLSGYLERDISQDSLQDIKQKVQDKYRYCESRRRVLLQHVHEGYEKDLWEYIED.

The segment covering 1 to 47 (MDSDEGYNYEFDEDEECSEEDSGAEEEEDEDDDEPDDDTLDLGEVEL) has biased composition (acidic residues). The segment at 1–95 (MDSDEGYNYE…GGGGGPGHEQ (95 aa)) is disordered. Gly residues predominate over residues 65–92 (ETGGGGGSALGPGGGGGGGGGGGGGGPG). Positions 105-153 (TAEQILQHMVECIREVNEVIQNPATITRILLSHFNWDKEKLMERYFDGN) are UBA-like. An N6-acetyllysine modification is found at K142. The segment at 182 to 393 (QDMPCQICYL…SAWYNCNRYN (212 aa)) is TRIAD supradomain. The Zn(2+) site is built by C186, C189, C203, H205, C208, C211, C231, C236, C276, C281, C297, C299, C304, C307, H312, C317, C344, and C347. Residues 186–236 (CQICYLNYPNSYFTGLECGHKFCMQCWSEYLTTKIMEEGMGQTISCPAHGC) form an RING-type 1 zinc finger. The IBR-type zinc-finger motif lies at 256 to 317 (LKYQHLITNS…GENWHDPVKC (62 aa)). The RING-type 2; atypical zinc-finger motif lies at 344–375 (CPKCHVTIEKDGGCNHMVCRNQNCKAEFCWVC). C357 is a catalytic residue. C362, C367, C372, C375, H382, and C389 together coordinate Zn(2+). The segment at 408–557 (RAALQRYLFY…EKDLWEYIED (150 aa)) is ariadne domain.

It belongs to the RBR family. Ariadne subfamily. Interacts (via the first RING-type zinc finger) with UBE2L3. Associates with cullin-RING ubiquitin ligase (CRL) complexes containing CUL1, CUL2 and CUL3. Interacts with neddylated CUL1. Interacts with neddylated CUL2. Interacts with neddylated CUL3. Interacts with neddylated CUL4A. In terms of tissue distribution, widely expressed.

The protein resides in the cytoplasm. It is found in the nucleus. The protein localises to the cajal body. The catalysed reaction is [E2 ubiquitin-conjugating enzyme]-S-ubiquitinyl-L-cysteine + [acceptor protein]-L-lysine = [E2 ubiquitin-conjugating enzyme]-L-cysteine + [acceptor protein]-N(6)-ubiquitinyl-L-lysine.. Its pathway is protein modification; protein ubiquitination. Its activity is regulated as follows. Autoinhibited by the ariadne domain, which masks the second RING-type zinc finger that contains the active site and inhibits the E3 activity. Inhibition is relieved upon binding to neddylated cullin-RING ubiquitin ligase complexes, which activate the E3 ligase activity of ARIH1. In terms of biological role, E3 ubiquitin-protein ligase, which catalyzes ubiquitination of target proteins together with ubiquitin-conjugating enzyme E2 UBE2L3. Acts as an atypical E3 ubiquitin-protein ligase by working together with cullin-RING ubiquitin ligase (CRL) complexes and initiating ubiquitination of CRL substrates: associates with CRL complexes and specifically mediates addition of the first ubiquitin on CRLs targets. The initial ubiquitin is then elongated by CDC34/UBE2R1 and UBE2R2. E3 ubiquitin-protein ligase activity is activated upon binding to neddylated cullin-RING ubiquitin ligase complexes. Plays a role in protein translation in response to DNA damage by mediating ubiquitination of EIF4E2, the consequences of EIF4E2 ubiquitination are however unclear. According to a report, EIF4E2 ubiquitination leads to promote EIF4E2 cap-binding and protein translation arrest. According to another report EIF4E2 ubiquitination leads to its subsequent degradation. Acts as the ligase involved in ISGylation of EIF4E2. In vitro, controls the degradation of the LINC (LInker of Nucleoskeleton and Cytoskeleton) complex member SUN2 and may therefore have a role in the formation and localization of the LINC complex, and as a consequence, nuclear subcellular localization and nuclear morphology. The chain is E3 ubiquitin-protein ligase ARIH1 from Homo sapiens (Human).